Consider the following 805-residue polypeptide: Cell division cycle protein 48 homolog (805 aa).

Residues 249–256 and 522–529 each bind ATP; these read GPPGSGKT and GPPGCGKT. Residues 783–805 are disordered; it reads GATAAADPFATSNAAADDDDLYS.

It belongs to the AAA ATPase family.

Probably functions in cell division and growth processes. The polypeptide is Cell division cycle protein 48 homolog (CAFP) (Capsicum annuum (Capsicum pepper)).